A 506-amino-acid polypeptide reads, in one-letter code: Maturase K (506 aa).

It belongs to the intron maturase 2 family. MatK subfamily.

The protein localises to the plastid. Its subcellular location is the chloroplast. In terms of biological role, usually encoded in the trnK tRNA gene intron. Probably assists in splicing its own and other chloroplast group II introns. The protein is Maturase K of Trifolium incarnatum (Crimson clover).